The sequence spans 494 residues: Adenosylhomocysteinase (494 aa).

Residues T72, D155, and E217 each contribute to the substrate site. Residue 218–220 participates in NAD(+) binding; it reads TTT. Substrate is bound by residues K247 and D251. NAD(+) contacts are provided by residues N252, 281–286, E304, N339, 360–362, and N408; these read GYGDVG and IGH.

Belongs to the adenosylhomocysteinase family. NAD(+) serves as cofactor.

It localises to the cytoplasm. It catalyses the reaction S-adenosyl-L-homocysteine + H2O = L-homocysteine + adenosine. It participates in amino-acid biosynthesis; L-homocysteine biosynthesis; L-homocysteine from S-adenosyl-L-homocysteine: step 1/1. In terms of biological role, may play a key role in the regulation of the intracellular concentration of adenosylhomocysteine. The protein is Adenosylhomocysteinase of Nocardia farcinica (strain IFM 10152).